A 537-amino-acid chain; its full sequence is Phosphoenolpyruvate carboxykinase (ATP) (537 aa).

Residues Arg-61, Tyr-195, and Lys-201 each contribute to the substrate site. ATP contacts are provided by residues Lys-201, His-220, and 236–244 (GLSGTGKTT). Mn(2+) contacts are provided by Lys-201 and His-220. Residue Asp-257 coordinates Mn(2+). Residues Glu-285, Arg-323, and Thr-448 each coordinate ATP. Arg-323 is a substrate binding site.

The protein belongs to the phosphoenolpyruvate carboxykinase (ATP) family. Mn(2+) serves as cofactor.

It is found in the cytoplasm. The catalysed reaction is oxaloacetate + ATP = phosphoenolpyruvate + ADP + CO2. The protein operates within carbohydrate biosynthesis; gluconeogenesis. Its function is as follows. Involved in the gluconeogenesis. Catalyzes the conversion of oxaloacetate (OAA) to phosphoenolpyruvate (PEP) through direct phosphoryl transfer between the nucleoside triphosphate and OAA. This is Phosphoenolpyruvate carboxykinase (ATP) from Parvibaculum lavamentivorans (strain DS-1 / DSM 13023 / NCIMB 13966).